Reading from the N-terminus, the 58-residue chain is Enterocin-HF (58 aa).

A propeptide spanning residues 1 to 15 is cleaved from the precursor; sequence MEKLTVKEMSQVVGG. An intrachain disulfide couples Cys-24 to Cys-29.

The protein resides in the secreted. In terms of biological role, bacteriocin. The chain is Enterocin-HF (entHF) from Enterococcus faecium (Streptococcus faecium).